Reading from the N-terminus, the 519-residue chain is Ribonuclease Y 1 (519 aa).

The chain crosses the membrane as a helical span at residues 2–22 (IILYIILAIIAIVVGYCAGFF). Residues 84–113 (QKQEDRLLQREDSLDRKDNSFEKRENSLER) form a disordered region. A KH domain is found at 209–294 (TITVVSLPND…EMVEKAKKEM (86 aa)). In terms of domain architecture, HD spans 335 to 428 (VLNHSIEVAN…VAAANSISAA (94 aa)).

The protein belongs to the RNase Y family.

It localises to the cell membrane. Its function is as follows. Endoribonuclease that initiates mRNA decay. The chain is Ribonuclease Y 1 from Pediococcus pentosaceus (strain ATCC 25745 / CCUG 21536 / LMG 10740 / 183-1w).